A 186-amino-acid polypeptide reads, in one-letter code: MTWIGLLIVGLTAIAVQGEVPIVTRAEWNAKPPNGAIDSMETPLPRAVIAHTAGGACADDVTCSQHMRNLQNFQMSKQKFSDIGYHYLIGGNGKVYEGRSPSQRGAFAGPNNDGSLGIAFIGNFEKQAPNKEALDAAKELLEQAVKQAQLVEGYKLLGHRQVSATMSPGEALYALIQQWPNWSEEM.

The first 18 residues, 1–18 (MTWIGLLIVGLTAIAVQG), serve as a signal peptide directing secretion. The N-acetylmuramoyl-L-alanine amidase domain occupies 47–169 (AVIAHTAGGA…RQVSATMSPG (123 aa)). A disulfide bridge links cysteine 57 with cysteine 63. Asparagine 181 carries N-linked (GlcNAc...) asparagine glycosylation.

It belongs to the N-acetylmuramoyl-L-alanine amidase 2 family.

Its subcellular location is the secreted. Peptidoglycan-recognition protein that plays a key role in innate immunity by binding to peptidoglycans (PGN) of Gram-positive bacteria and activating the Toll pathway. Has no activity against on Gram-negative bacteria and fungi. Shows some partial redundancy with PRPGP-SA in Gram-positive bacteria recognition. May act by activating the proteolytic cleavage of Spatzle and the subsequent activation of Toll pathway. Recognizes S.aureus PGN. This chain is Peptidoglycan-recognition protein SD (PGRP-SD), found in Drosophila simulans (Fruit fly).